The chain runs to 314 residues: Homoserine O-succinyltransferase (314 aa).

Cysteine 142 serves as the catalytic Acyl-thioester intermediate. Residues lysine 163 and serine 192 each coordinate substrate. Histidine 235 functions as the Proton acceptor in the catalytic mechanism. Residue glutamate 237 is part of the active site. Arginine 249 lines the substrate pocket.

This sequence belongs to the MetA family.

Its subcellular location is the cytoplasm. It catalyses the reaction L-homoserine + succinyl-CoA = O-succinyl-L-homoserine + CoA. It participates in amino-acid biosynthesis; L-methionine biosynthesis via de novo pathway; O-succinyl-L-homoserine from L-homoserine: step 1/1. In terms of biological role, transfers a succinyl group from succinyl-CoA to L-homoserine, forming succinyl-L-homoserine. The protein is Homoserine O-succinyltransferase of Shewanella sediminis (strain HAW-EB3).